The following is a 213-amino-acid chain: Proteasome subunit beta (213 aa).

Residues 1-11 (MSMIEEKIYKG) constitute a propeptide, removed in mature form; by autocatalysis. The active-site Nucleophile is the T12.

This sequence belongs to the peptidase T1B family. In terms of assembly, the 20S proteasome core is composed of 14 alpha and 14 beta subunits that assemble into four stacked heptameric rings, resulting in a barrel-shaped structure. The two inner rings, each composed of seven catalytic beta subunits, are sandwiched by two outer rings, each composed of seven alpha subunits. The catalytic chamber with the active sites is on the inside of the barrel. Has probably a gated structure, the ends of the cylinder being occluded by the N-termini of the alpha-subunits. Is likely capped at one or both ends by the proteasome regulatory ATPase, PAN.

Its subcellular location is the cytoplasm. It carries out the reaction Cleavage of peptide bonds with very broad specificity.. Its activity is regulated as follows. The formation of the proteasomal ATPase PAN-20S proteasome complex, via the docking of the C-termini of PAN into the intersubunit pockets in the alpha-rings, triggers opening of the gate for substrate entry. Interconversion between the open-gate and close-gate conformations leads to a dynamic regulation of the 20S proteasome proteolysis activity. Functionally, component of the proteasome core, a large protease complex with broad specificity involved in protein degradation. The chain is Proteasome subunit beta from Archaeoglobus fulgidus (strain ATCC 49558 / DSM 4304 / JCM 9628 / NBRC 100126 / VC-16).